The primary structure comprises 495 residues: Telomere-binding protein subunit alpha (495 aa).

Positions 1–13 are enriched in polar residues; sequence MSTAAKQNRSTSR. Positions 1–31 are disordered; sequence MSTAAKQNRSTSRVSKKKTAAPKEGAAKKSD.

It belongs to the telombin family. Heterodimer of an alpha and a beta subunit.

Its subcellular location is the nucleus. The protein localises to the chromosome. It is found in the telomere. In terms of biological role, may function as protective capping of the single-stranded telomeric overhang. May also participate in telomere length regulation during DNA replication. Binds specifically to the T4G4-containing extension on the 3'strand and protects this region of the telomere from nuclease digestion and chemical modification. This chain is Telomere-binding protein subunit alpha (MAC-56A), found in Sterkiella nova (Ciliate).